Consider the following 82-residue polypeptide: RNA-binding protein TTE2299 (82 aa).

The protein belongs to the eukaryotic ribosomal protein eL8 family.

The polypeptide is RNA-binding protein TTE2299 (Caldanaerobacter subterraneus subsp. tengcongensis (strain DSM 15242 / JCM 11007 / NBRC 100824 / MB4) (Thermoanaerobacter tengcongensis)).